We begin with the raw amino-acid sequence, 233 residues long: 2-C-methyl-D-erythritol 4-phosphate cytidylyltransferase (233 aa).

Belongs to the IspD/TarI cytidylyltransferase family. IspD subfamily.

The catalysed reaction is 2-C-methyl-D-erythritol 4-phosphate + CTP + H(+) = 4-CDP-2-C-methyl-D-erythritol + diphosphate. It participates in isoprenoid biosynthesis; isopentenyl diphosphate biosynthesis via DXP pathway; isopentenyl diphosphate from 1-deoxy-D-xylulose 5-phosphate: step 2/6. Functionally, catalyzes the formation of 4-diphosphocytidyl-2-C-methyl-D-erythritol from CTP and 2-C-methyl-D-erythritol 4-phosphate (MEP). The polypeptide is 2-C-methyl-D-erythritol 4-phosphate cytidylyltransferase (Vibrio atlanticus (strain LGP32) (Vibrio splendidus (strain Mel32))).